Consider the following 235-residue polypeptide: Orotidine 5'-phosphate decarboxylase (235 aa).

Residues D9, K31, 58–67, T121, R180, Q190, G210, and R211 contribute to the substrate site; that span reads DLKFHDIPNT. The Proton donor role is filled by K60.

The protein belongs to the OMP decarboxylase family. Type 1 subfamily. Homodimer.

The enzyme catalyses orotidine 5'-phosphate + H(+) = UMP + CO2. Its pathway is pyrimidine metabolism; UMP biosynthesis via de novo pathway; UMP from orotate: step 2/2. In terms of biological role, catalyzes the decarboxylation of orotidine 5'-monophosphate (OMP) to uridine 5'-monophosphate (UMP). This is Orotidine 5'-phosphate decarboxylase from Nitratidesulfovibrio vulgaris (strain ATCC 29579 / DSM 644 / CCUG 34227 / NCIMB 8303 / VKM B-1760 / Hildenborough) (Desulfovibrio vulgaris).